The primary structure comprises 357 residues: Phosphoribosylformylglycinamidine cyclo-ligase (357 aa).

It belongs to the AIR synthase family.

The protein localises to the cytoplasm. It carries out the reaction 2-formamido-N(1)-(5-O-phospho-beta-D-ribosyl)acetamidine + ATP = 5-amino-1-(5-phospho-beta-D-ribosyl)imidazole + ADP + phosphate + H(+). It participates in purine metabolism; IMP biosynthesis via de novo pathway; 5-amino-1-(5-phospho-D-ribosyl)imidazole from N(2)-formyl-N(1)-(5-phospho-D-ribosyl)glycinamide: step 2/2. The chain is Phosphoribosylformylglycinamidine cyclo-ligase from Rhizobium rhizogenes (strain K84 / ATCC BAA-868) (Agrobacterium radiobacter).